The primary structure comprises 145 residues: Basic phospholipase A2 Vb-2 (145 aa).

The N-terminal stretch at 1–19 (MNPAHLLVLLAVCVSLLGA) is a signal peptide. Positions 20–27 (ANIPPQPL) are excised as a propeptide. Disulfide bonds link Cys38–Cys97, Cys52–Cys144, Cys54–Cys70, Cys69–Cys125, Cys76–Cys118, Cys86–Cys111, and Cys104–Cys116. Ca(2+) is bound by residues Tyr53, Gly55, and Gly57. His73 is a catalytic residue. Residue Asp74 participates in Ca(2+) binding. Asp119 is an active-site residue.

The cofactor is Ca(2+). Expressed by the venom gland.

The protein resides in the secreted. It catalyses the reaction a 1,2-diacyl-sn-glycero-3-phosphocholine + H2O = a 1-acyl-sn-glycero-3-phosphocholine + a fatty acid + H(+). Functionally, snake venom phospholipase A2 (PLA2) that has only a weak enzymatic activity. Inhibits neuromuscular transmission by blocking acetylcholine release from the nerve termini. PLA2 catalyzes the calcium-dependent hydrolysis of the 2-acyl groups in 3-sn-phosphoglycerides. The sequence is that of Basic phospholipase A2 Vb-2 from Bungarus fasciatus (Banded krait).